The chain runs to 146 residues: Leghemoglobin (146 aa).

The Globin domain occupies 3–146; sequence AFTEKQEALV…FAAGIKKAYA (144 aa). Residues tyrosine 26 and tyrosine 31 each carry the nitrated tyrosine modification. Serine 46 is a heme b binding site. Serine 46 carries the post-translational modification Phosphoserine. Histidine 62 provides a ligand contact to O2. The heme b site is built by histidine 93 and lysine 96. Tyrosine 134 is modified (nitrated tyrosine).

It belongs to the plant globin family. Monomer. Post-translationally, nitrated mainly at Tyr-31 and, to a lower extent, at Tyr-26 and Tyr-134, in effective nodules and particularly in hypoxic conditions; this mechanism may play a protective role in the symbiosis by buffering toxic peroxynitrite NO(2)(-). Nitration level decrease during nodule senescence. In terms of processing, phosphorylation at Ser-46 disrupts the molecular environment of its porphyrin ring oxygen binding pocket, thus leading to a reduced oxygen consumption and to the delivery of oxygen O(2) to symbiosomes. Root nodules.

The protein resides in the cytoplasm. It localises to the cytosol. Its subcellular location is the nucleus. In terms of biological role, leghemoglobin that reversibly binds oxygen O(2) through a pentacoordinated heme iron. In root nodules, facilitates the diffusion of oxygen to the bacteroids while preventing the bacterial nitrogenase from being inactivated by buffering dioxygen, nitric oxide and carbon monoxide, and promoting the formation of reactive oxygen species (ROS, e.g. H(2)O(2)). This role is essential for symbiotic nitrogen fixation (SNF). The polypeptide is Leghemoglobin (Phaseolus vulgaris (Kidney bean)).